Reading from the N-terminus, the 379-residue chain is Heme chaperone HemW (379 aa).

The Radical SAM core domain maps to 1–233; that stretch reads MKSAYIHIPF…MSKMEAHGIH (233 aa). Tyr-5 contacts S-adenosyl-L-methionine. 3 residues coordinate [4Fe-4S] cluster: Cys-11, Cys-15, and Cys-18. S-adenosyl-L-methionine is bound by residues Gly-60, 61–62, Glu-94, Gln-121, Arg-133, and Asp-158; that span reads GT.

This sequence belongs to the anaerobic coproporphyrinogen-III oxidase family. HemW subfamily. It depends on [4Fe-4S] cluster as a cofactor.

It is found in the cytoplasm. In terms of biological role, probably acts as a heme chaperone, transferring heme to an unknown acceptor. Binds one molecule of heme per monomer, possibly covalently. Binds 1 [4Fe-4S] cluster. The cluster is coordinated with 3 cysteines and an exchangeable S-adenosyl-L-methionine. This is Heme chaperone HemW from Bacillus subtilis (strain 168).